Here is a 122-residue protein sequence, read N- to C-terminus: Small ribosomal subunit protein uS13 (122 aa).

The tract at residues 99–122 (RGQRTHTNARTRKGPAKAIAGKKK) is disordered.

It belongs to the universal ribosomal protein uS13 family. As to quaternary structure, part of the 30S ribosomal subunit. Forms a loose heterodimer with protein S19. Forms two bridges to the 50S subunit in the 70S ribosome.

In terms of biological role, located at the top of the head of the 30S subunit, it contacts several helices of the 16S rRNA. In the 70S ribosome it contacts the 23S rRNA (bridge B1a) and protein L5 of the 50S subunit (bridge B1b), connecting the 2 subunits; these bridges are implicated in subunit movement. Contacts the tRNAs in the A and P-sites. The protein is Small ribosomal subunit protein uS13 of Rhodopseudomonas palustris (strain BisA53).